The primary structure comprises 284 residues: Bifunctional protein FolD (284 aa).

Residues 166–168 and I232 contribute to the NADP(+) site; that span reads GAS.

It belongs to the tetrahydrofolate dehydrogenase/cyclohydrolase family. As to quaternary structure, homodimer.

It carries out the reaction (6R)-5,10-methylene-5,6,7,8-tetrahydrofolate + NADP(+) = (6R)-5,10-methenyltetrahydrofolate + NADPH. The catalysed reaction is (6R)-5,10-methenyltetrahydrofolate + H2O = (6R)-10-formyltetrahydrofolate + H(+). It participates in one-carbon metabolism; tetrahydrofolate interconversion. Functionally, catalyzes the oxidation of 5,10-methylenetetrahydrofolate to 5,10-methenyltetrahydrofolate and then the hydrolysis of 5,10-methenyltetrahydrofolate to 10-formyltetrahydrofolate. The chain is Bifunctional protein FolD from Pseudomonas entomophila (strain L48).